The chain runs to 111 residues: Large ribosomal subunit protein uL23 (111 aa).

It belongs to the universal ribosomal protein uL23 family. Part of the 50S ribosomal subunit. Contacts protein L29, and trigger factor when it is bound to the ribosome.

One of the early assembly proteins it binds 23S rRNA. One of the proteins that surrounds the polypeptide exit tunnel on the outside of the ribosome. Forms the main docking site for trigger factor binding to the ribosome. The chain is Large ribosomal subunit protein uL23 from Chlamydia trachomatis serovar A (strain ATCC VR-571B / DSM 19440 / HAR-13).